Consider the following 28-residue polypeptide: Dolichyl-diphosphooligosaccharide--protein glycosyltransferase subunit 1 (28 aa).

It belongs to the OST1 family. In terms of assembly, component of the oligosaccharyltransferase (OST) complex.

The protein localises to the endoplasmic reticulum membrane. It functions in the pathway protein modification; protein glycosylation. Its function is as follows. Subunit of the oligosaccharyl transferase (OST) complex that catalyzes the initial transfer of a defined glycan (Glc(3)Man(9)GlcNAc(2) in eukaryotes) from the lipid carrier dolichol-pyrophosphate to an asparagine residue within an Asn-X-Ser/Thr consensus motif in nascent polypeptide chains, the first step in protein N-glycosylation. N-glycosylation occurs cotranslationally and the complex associates with the Sec61 complex at the channel-forming translocon complex that mediates protein translocation across the endoplasmic reticulum (ER). All subunits are required for a maximal enzyme activity. In Gallus gallus (Chicken), this protein is Dolichyl-diphosphooligosaccharide--protein glycosyltransferase subunit 1.